Here is a 231-residue protein sequence, read N- to C-terminus: Ribosomal RNA small subunit methyltransferase G (231 aa).

S-adenosyl-L-methionine is bound by residues glycine 75, phenylalanine 80, 126-127 (AE), and arginine 142.

This sequence belongs to the methyltransferase superfamily. RNA methyltransferase RsmG family.

It localises to the cytoplasm. In terms of biological role, specifically methylates the N7 position of a guanine in 16S rRNA. The chain is Ribosomal RNA small subunit methyltransferase G from Mycoplasma capricolum subsp. capricolum (strain California kid / ATCC 27343 / NCTC 10154).